Reading from the N-terminus, the 371-residue chain is Ferrochelatase (371 aa).

Fe cation-binding residues include His218 and Glu299.

This sequence belongs to the ferrochelatase family.

Its subcellular location is the cytoplasm. The enzyme catalyses heme b + 2 H(+) = protoporphyrin IX + Fe(2+). It functions in the pathway porphyrin-containing compound metabolism; protoheme biosynthesis; protoheme from protoporphyrin-IX: step 1/1. Functionally, catalyzes the ferrous insertion into protoporphyrin IX. The protein is Ferrochelatase of Cupriavidus metallidurans (strain ATCC 43123 / DSM 2839 / NBRC 102507 / CH34) (Ralstonia metallidurans).